A 434-amino-acid polypeptide reads, in one-letter code: Adenylosuccinate synthetase (434 aa).

Residues 22-28 (GDEGKGK) and 50-52 (GHT) each bind GTP. Asp-23 (proton acceptor) is an active-site residue. 2 residues coordinate Mg(2+): Asp-23 and Gly-50. IMP is bound by residues 23 to 26 (DEGK), 48 to 51 (NAGH), Thr-139, Arg-153, Gln-234, Thr-249, and Arg-313. Catalysis depends on His-51, which acts as the Proton donor. 309-315 (ATTGRKR) contributes to the substrate binding site. Residues Arg-315, 341-343 (KLD), and 423-425 (SVG) each bind GTP.

Belongs to the adenylosuccinate synthetase family. Homodimer. The cofactor is Mg(2+).

The protein resides in the cytoplasm. The enzyme catalyses IMP + L-aspartate + GTP = N(6)-(1,2-dicarboxyethyl)-AMP + GDP + phosphate + 2 H(+). The protein operates within purine metabolism; AMP biosynthesis via de novo pathway; AMP from IMP: step 1/2. In terms of biological role, plays an important role in the de novo pathway of purine nucleotide biosynthesis. Catalyzes the first committed step in the biosynthesis of AMP from IMP. This is Adenylosuccinate synthetase from Pelodictyon phaeoclathratiforme (strain DSM 5477 / BU-1).